A 569-amino-acid chain; its full sequence is Glutamate--tRNA ligase (569 aa).

Positions 108–118 (PNPDFVLHLGS) match the 'HIGH' region motif.

It belongs to the class-I aminoacyl-tRNA synthetase family. Glutamate--tRNA ligase type 2 subfamily.

It localises to the cytoplasm. It catalyses the reaction tRNA(Glu) + L-glutamate + ATP = L-glutamyl-tRNA(Glu) + AMP + diphosphate. Its function is as follows. Catalyzes the attachment of glutamate to tRNA(Glu) in a two-step reaction: glutamate is first activated by ATP to form Glu-AMP and then transferred to the acceptor end of tRNA(Glu). The polypeptide is Glutamate--tRNA ligase (Thermofilum pendens (strain DSM 2475 / Hrk 5)).